The primary structure comprises 193 residues: Small COPII coat GTPase SAR1 (193 aa).

Residues 3 to 5 carry the STAR; SAR1-N-terminal activation recruitment. Required for the activation and subsequent recruitment to ER membrane motif; that stretch reads FLW. The segment at 11–15 is mediates recruitment to ER membranes; the sequence is VLNML. Mg(2+) is bound at residue aspartate 30. GDP is bound by residues asparagine 31, alanine 32, glycine 33, lysine 34, threonine 35, and threonine 36. Residue asparagine 31 participates in GTP binding. GTP-binding residues include glycine 33, lysine 34, threonine 35, and threonine 36. Aspartate 71 contacts Mg(2+). Residues asparagine 130, lysine 131, aspartate 133, valine 176, and leucine 177 each contribute to the GDP site. Positions 130, 131, 133, 176, and 177 each coordinate GTP.

Belongs to the small GTPase superfamily. SAR1 family. Homodimer; upon association with membrane. Part of the coat protein complex II/COPII, composed of SEC23/24 and SEC13/31 heterodimers, that it helps recruit and assemble on endoplasmic reticulum (ER) membranes at ER exit sites.

Its subcellular location is the endoplasmic reticulum membrane. It is found in the golgi apparatus. It localises to the golgi stack membrane. The protein localises to the cytoplasm. The protein resides in the cytosol. It carries out the reaction GTP + H2O = GDP + phosphate + H(+). With respect to regulation, small GTPases activation is mediated by guanine exchange factors (GEF), while inactivation through hydrolysis of the bound GTP is stimulated by GTPase activating proteins (GAP). Its function is as follows. Small GTPase that cycles between an active GTP-bound and an inactive GDP-bound state and mainly functions in vesicle-mediated endoplasmic reticulum (ER) to Golgi transport. The active GTP-bound form inserts into the endoplasmic reticulum membrane where it recruits the remainder of the coat protein complex II/COPII. The coat protein complex II assembling and polymerizing on endoplasmic reticulum membrane is responsible for both the sorting of cargos and the deformation and budding of membranes into vesicles destined to the Golgi. Plays a role in transporting the tyrosine kinase receptor let-23 from the endoplasmic reticulum to the plasma membrane of vulval precursor cells. The sequence is that of Small COPII coat GTPase SAR1 from Caenorhabditis elegans.